We begin with the raw amino-acid sequence, 317 residues long: Pantothenate kinase (317 aa).

Residue 101-108 participates in ATP binding; that stretch reads GSVAVGKS.

Belongs to the prokaryotic pantothenate kinase family.

The protein resides in the cytoplasm. The enzyme catalyses (R)-pantothenate + ATP = (R)-4'-phosphopantothenate + ADP + H(+). Its pathway is cofactor biosynthesis; coenzyme A biosynthesis; CoA from (R)-pantothenate: step 1/5. This Actinobacillus succinogenes (strain ATCC 55618 / DSM 22257 / CCUG 43843 / 130Z) protein is Pantothenate kinase.